Here is a 343-residue protein sequence, read N- to C-terminus: Putative outer membrane protein y4fJ (343 aa).

The first 17 residues, 1–17, serve as a signal peptide directing secretion; it reads MRMNFSTVLLGSSVALA.

The protein belongs to the alphaproteobacteria porin family.

Its subcellular location is the cell outer membrane. In terms of biological role, may act as an outer membrane pore. The protein is Putative outer membrane protein y4fJ of Sinorhizobium fredii (strain NBRC 101917 / NGR234).